Here is a 222-residue protein sequence, read N- to C-terminus: GTP cyclohydrolase 1 (222 aa).

Residues Cys111, His114, and Cys182 each contribute to the Zn(2+) site.

Belongs to the GTP cyclohydrolase I family. In terms of assembly, toroid-shaped homodecamer, composed of two pentamers of five dimers.

The enzyme catalyses GTP + H2O = 7,8-dihydroneopterin 3'-triphosphate + formate + H(+). It functions in the pathway cofactor biosynthesis; 7,8-dihydroneopterin triphosphate biosynthesis; 7,8-dihydroneopterin triphosphate from GTP: step 1/1. This Salmonella choleraesuis (strain SC-B67) protein is GTP cyclohydrolase 1.